A 503-amino-acid chain; its full sequence is Nuclear respiratory factor 1 (503 aa).

The segment at 1 to 78 (MEEHGVTQTE…AHLAAAGPVG (78 aa)) is dimerization. Positions 36 to 57 (SMLSADEDSPSSPEDTSYDDSD) are disordered. Residues Ser-39, Ser-44, Ser-46, Ser-47, and Ser-52 each carry the phosphoserine; by CK2 modification. The Nuclear localization signal motif lies at 88–116 (GKKRKRPHVFESNPSIRKRQQTRLLRKLR). The DNA-binding element occupies 109-305 (TRLLRKLRAT…SIAHLVPSQT (197 aa)). Residue Lys-139 forms a Glycyl lysine isopeptide (Lys-Gly) (interchain with G-Cter in SUMO2) linkage. The segment at 301–476 (VPSQTVVQTF…AQGNGPVQVA (176 aa)) is required for transcriptional activation.

The protein belongs to the NRF1/Ewg family. Homodimer. Binds DNA as a dimer. Interacts with PPRC1. Post-translationally, phosphorylation enhances DNA binding. As to expression, widely expressed in embryonic, fetal, and adult tissues.

It localises to the nucleus. Transcription factor that activates the expression of the EIF2S1 (EIF2-alpha) gene. Links the transcriptional modulation of key metabolic genes to cellular growth and development. Implicated in the control of nuclear genes required for respiration, heme biosynthesis, and mitochondrial DNA transcription and replication. This is Nuclear respiratory factor 1 (Nrf1) from Mus musculus (Mouse).